The sequence spans 393 residues: Riboflavin biosynthesis protein RibBA (393 aa).

Residues M1–K200 are DHBP synthase. Residues R27–E28, D32, R139–T143, and E163 each bind D-ribulose 5-phosphate. E28 provides a ligand contact to Mg(2+). Residue H142 participates in Mg(2+) binding. A GTP cyclohydrolase II region spans residues L201–I393. GTP is bound at residue R249–A253. Zn(2+)-binding residues include C254, C265, and C267. GTP is bound by residues Q270, E291–R293, and T313. D325 serves as the catalytic Proton acceptor; for GTP cyclohydrolase activity. The active-site Nucleophile; for GTP cyclohydrolase activity is R327. Positions 348 and 353 each coordinate GTP.

In the N-terminal section; belongs to the DHBP synthase family. It in the C-terminal section; belongs to the GTP cyclohydrolase II family. The cofactor is Mg(2+). Mn(2+) serves as cofactor. Requires Zn(2+) as cofactor.

It carries out the reaction D-ribulose 5-phosphate = (2S)-2-hydroxy-3-oxobutyl phosphate + formate + H(+). The enzyme catalyses GTP + 4 H2O = 2,5-diamino-6-hydroxy-4-(5-phosphoribosylamino)-pyrimidine + formate + 2 phosphate + 3 H(+). It participates in cofactor biosynthesis; riboflavin biosynthesis; 2-hydroxy-3-oxobutyl phosphate from D-ribulose 5-phosphate: step 1/1. The protein operates within cofactor biosynthesis; riboflavin biosynthesis; 5-amino-6-(D-ribitylamino)uracil from GTP: step 1/4. Its function is as follows. Catalyzes the conversion of D-ribulose 5-phosphate to formate and 3,4-dihydroxy-2-butanone 4-phosphate. Catalyzes the conversion of GTP to 2,5-diamino-6-ribosylamino-4(3H)-pyrimidinone 5'-phosphate (DARP), formate and pyrophosphate. The protein is Riboflavin biosynthesis protein RibBA of Staphylococcus aureus (strain COL).